The primary structure comprises 633 residues: tRNA uridine 5-carboxymethylaminomethyl modification enzyme MnmG (633 aa).

Residues Gly15–Gly20, Ile127, and Ser182 contribute to the FAD site. Gly276–Phe290 provides a ligand contact to NAD(+). Gln373 lines the FAD pocket.

This sequence belongs to the MnmG family. In terms of assembly, homodimer. Heterotetramer of two MnmE and two MnmG subunits. FAD is required as a cofactor.

The protein localises to the cytoplasm. Its function is as follows. NAD-binding protein involved in the addition of a carboxymethylaminomethyl (cmnm) group at the wobble position (U34) of certain tRNAs, forming tRNA-cmnm(5)s(2)U34. The sequence is that of tRNA uridine 5-carboxymethylaminomethyl modification enzyme MnmG from Streptococcus agalactiae serotype III (strain NEM316).